Reading from the N-terminus, the 368-residue chain is Agmatine deiminase (368 aa).

Cys357 serves as the catalytic Amidino-cysteine intermediate.

It belongs to the agmatine deiminase family. Homodimer.

It carries out the reaction agmatine + H2O = N-carbamoylputrescine + NH4(+). The protein operates within amine and polyamine biosynthesis; putrescine biosynthesis via agmatine pathway; N-carbamoylputrescine from agmatine: step 1/1. Its function is as follows. Mediates the hydrolysis of agmatine into N-carbamoylputrescine in the arginine decarboxylase (ADC) pathway of putrescine biosynthesis, a basic polyamine. This chain is Agmatine deiminase, found in Pseudomonas syringae pv. syringae (strain B728a).